Here is a 1593-residue protein sequence, read N- to C-terminus: DNA-directed RNA polymerase subunit beta' (1593 aa).

The Zn(2+) site is built by Cys-74, Cys-76, Cys-89, and Cys-92. Residues Asp-648, Asp-650, and Asp-652 each coordinate Mg(2+). Residues Cys-1026, Cys-1100, Cys-1107, and Cys-1110 each contribute to the Zn(2+) site.

This sequence belongs to the RNA polymerase beta' chain family. The RNAP catalytic core consists of 2 alpha, 1 beta, 1 beta' and 1 omega subunit. When a sigma factor is associated with the core the holoenzyme is formed, which can initiate transcription. Mg(2+) serves as cofactor. The cofactor is Zn(2+).

The enzyme catalyses RNA(n) + a ribonucleoside 5'-triphosphate = RNA(n+1) + diphosphate. DNA-dependent RNA polymerase catalyzes the transcription of DNA into RNA using the four ribonucleoside triphosphates as substrates. This chain is DNA-directed RNA polymerase subunit beta', found in Endomicrobium trichonymphae.